The chain runs to 371 residues: Probable cysteine protease RDL5 (371 aa).

The signal sequence occupies residues 1 to 23; sequence MGYAKSAMLIFLLALVIASCATA. Residues 24 to 143 constitute a propeptide, activation peptide; it reads MDMSVVSSND…NRYKTSDGDV (120 aa). Residue Asn94 is glycosylated (N-linked (GlcNAc...) asparagine). Intrachain disulfides connect Cys165-Cys206, Cys199-Cys239, and Cys298-Cys349. Cys168 is an active-site residue. Catalysis depends on residues His304 and Asn324.

This sequence belongs to the peptidase C1 family. Expressed in roots, inflorescences and siliques.

Its function is as follows. Possesses protease activity in vitro. This Arabidopsis thaliana (Mouse-ear cress) protein is Probable cysteine protease RDL5.